Reading from the N-terminus, the 222-residue chain is Alpha-S2-casein (222 aa).

An N-terminal signal peptide occupies residues 1 to 15; sequence MKFFIFTCLLAVALA. A phosphoserine mark is found at Ser23, Ser24, Ser25, Ser28, Ser46, Ser71, Ser72, Ser73, Ser76, Ser144, Ser146, Ser150, and Ser158. The stretch at residues 76–140 is a repeat; that stretch reads SAEVATEEVK…AVPITPTLNR (65 aa). The stretch at residues 158 to 222 is a repeat; sequence STEVFTKKTK…TKVIPYVRYL (65 aa).

The protein belongs to the alpha-casein family. In terms of tissue distribution, mammary gland specific. Secreted in milk.

It is found in the secreted. In terms of biological role, important role in the capacity of milk to transport calcium phosphate. Its function is as follows. Casocidin-I inhibits the growth of E.coli and S.carnosus. The polypeptide is Alpha-S2-casein (CSN1S2) (Bos taurus (Bovine)).